The primary structure comprises 378 residues: Putative glutamate--cysteine ligase 2-1 (378 aa).

This sequence belongs to the glutamate--cysteine ligase type 2 family. YbdK subfamily.

The catalysed reaction is L-cysteine + L-glutamate + ATP = gamma-L-glutamyl-L-cysteine + ADP + phosphate + H(+). ATP-dependent carboxylate-amine ligase which exhibits weak glutamate--cysteine ligase activity. The chain is Putative glutamate--cysteine ligase 2-1 from Corynebacterium efficiens (strain DSM 44549 / YS-314 / AJ 12310 / JCM 11189 / NBRC 100395).